The following is a 285-amino-acid chain: Inositol oxygenase (285 aa).

The interval 1 to 28 is disordered; that stretch reads MKVAADPDPSLVSQRDMEPEAAKDKDSF. Basic and acidic residues predominate over residues 15-28; sequence RDMEPEAAKDKDSF. Arginine 29 contributes to the substrate binding site. Serine 33 carries the phosphoserine modification. 85–87 lines the substrate pocket; that stretch reads DES. 3 residues coordinate Fe cation: histidine 98, histidine 123, and aspartate 124. Residues lysine 127 and 141-142 contribute to the substrate site; that span reads GD. Fe cation contacts are provided by histidine 194, histidine 220, and aspartate 253. Position 220–221 (220–221) interacts with substrate; it reads HS.

Belongs to the myo-inositol oxygenase family. Requires Fe cation as cofactor.

It localises to the cytoplasm. It catalyses the reaction myo-inositol + O2 = D-glucuronate + H2O + H(+). Its pathway is polyol metabolism; myo-inositol degradation into D-glucuronate; D-glucuronate from myo-inositol: step 1/1. The chain is Inositol oxygenase (MIOX) from Bos taurus (Bovine).